We begin with the raw amino-acid sequence, 246 residues long: Transcription factor A, mitochondrial (246 aa).

The N-terminal 42 residues, methionine 1–phenylalanine 42, are a transit peptide targeting the mitochondrion. A DNA-binding region (HMG box 1) is located at residues proline 50–lysine 118. Serine 55, serine 56, and serine 61 each carry phosphoserine; by PKA. Threonine 122 bears the Phosphothreonine mark. Residues proline 155–glutamate 219 constitute a DNA-binding region (HMG box 2). Serine 160 is modified (phosphoserine; by PKA). Phosphoserine occurs at positions 193 and 195.

Monomer; binds DNA as a monomer. Homodimer. Component of the mitochondrial transcription initiation complex, composed at least of TFB2M, TFAM and POLRMT. In this complex TFAM recruits POLRMT to the promoter whereas TFB2M induces structural changes in POLRMT to enable promoter opening and trapping of the DNA non-template strand. Upon metabolic stress, forms a complex composed of FOXO3, SIRT3, TFAM and POLRMT. Interacts with TFB1M and TFB2M. Interacts with CLPX; this enhances DNA-binding. Phosphorylation by PKA within the HMG box 1 impairs DNA binding and promotes degradation by the AAA+ Lon protease.

It is found in the mitochondrion. Its subcellular location is the mitochondrion matrix. The protein resides in the mitochondrion nucleoid. In terms of biological role, binds to the mitochondrial light strand promoter and functions in mitochondrial transcription regulation. Component of the mitochondrial transcription initiation complex, composed at least of TFB2M, TFAM and POLRMT that is required for basal transcription of mitochondrial DNA. In this complex, TFAM recruits POLRMT to a specific promoter whereas TFB2M induces structural changes in POLRMT to enable promoter opening and trapping of the DNA non-template strand. Required for accurate and efficient promoter recognition by the mitochondrial RNA polymerase. Promotes transcription initiation from the HSP1 and the light strand promoter by binding immediately upstream of transcriptional start sites. Is able to unwind DNA. Bends the mitochondrial light strand promoter DNA into a U-turn shape via its HMG boxes. Required for maintenance of normal levels of mitochondrial DNA. May play a role in organizing and compacting mitochondrial DNA. This is Transcription factor A, mitochondrial from Trachypithecus cristatus (Silvered leaf-monkey).